We begin with the raw amino-acid sequence, 154 residues long: Ribosome maturation factor RimP (154 aa).

The protein belongs to the RimP family.

The protein localises to the cytoplasm. Required for maturation of 30S ribosomal subunits. The protein is Ribosome maturation factor RimP of Desulforudis audaxviator (strain MP104C).